A 399-amino-acid polypeptide reads, in one-letter code: Nicotinate phosphoribosyltransferase (399 aa).

The residue at position 217 (His217) is a Phosphohistidine; by autocatalysis.

Belongs to the NAPRTase family. Post-translationally, transiently phosphorylated on a His residue during the reaction cycle. Phosphorylation strongly increases the affinity for substrates and increases the rate of nicotinate D-ribonucleotide production. Dephosphorylation regenerates the low-affinity form of the enzyme, leading to product release.

The catalysed reaction is nicotinate + 5-phospho-alpha-D-ribose 1-diphosphate + ATP + H2O = nicotinate beta-D-ribonucleotide + ADP + phosphate + diphosphate. Its pathway is cofactor biosynthesis; NAD(+) biosynthesis; nicotinate D-ribonucleotide from nicotinate: step 1/1. Functionally, catalyzes the synthesis of beta-nicotinate D-ribonucleotide from nicotinate and 5-phospho-D-ribose 1-phosphate at the expense of ATP. This is Nicotinate phosphoribosyltransferase from Burkholderia cenocepacia (strain HI2424).